We begin with the raw amino-acid sequence, 312 residues long: Fibrinogen-like protein 1 (312 aa).

The N-terminal stretch at 1–22 (MAKMFSFILVTTALVMGRGSSA) is a signal peptide. Residues 39–60 (LLETRVKQQQVKISQLLHEKQV) adopt a coiled-coil conformation. In terms of domain architecture, Fibrinogen C-terminal spans 74–306 (LGGKRQYADC…SVVMKIRPND (233 aa)). 2 disulfides stabilise this stretch: cysteine 83–cysteine 112 and cysteine 248–cysteine 261.

In terms of assembly, homodimer. Interacts (via the Fibrinogen C-terminal domain) with LAG3 (via Ig-like domains 1 and 2).

Its subcellular location is the secreted. Immune suppressive molecule that inhibits antigen-specific T-cell activation by acting as a major ligand of LAG3. Responsible for LAG3 T-cell inhibitory function. Binds LAG3 independently from MHC class II (MHC-II). Secreted by, and promotes growth of, hepatocytes. This is Fibrinogen-like protein 1 (FGL1) from Bos taurus (Bovine).